Consider the following 282-residue polypeptide: Putative 4-diphosphocytidyl-2-C-methyl-D-erythritol kinase (282 aa).

Residue K9 is part of the active site. 93 to 103 (PVSAGLAGGSA) serves as a coordination point for ATP. Residue D135 is part of the active site.

This sequence belongs to the GHMP kinase family. IspE subfamily.

It catalyses the reaction 4-CDP-2-C-methyl-D-erythritol + ATP = 4-CDP-2-C-methyl-D-erythritol 2-phosphate + ADP + H(+). Catalyzes the phosphorylation of the position 2 hydroxy group of 4-diphosphocytidyl-2C-methyl-D-erythritol. This chain is Putative 4-diphosphocytidyl-2-C-methyl-D-erythritol kinase (ispE), found in Staphylococcus epidermidis (strain ATCC 35984 / DSM 28319 / BCRC 17069 / CCUG 31568 / BM 3577 / RP62A).